We begin with the raw amino-acid sequence, 206 residues long: Large ribosomal subunit protein uL4 (206 aa).

The segment at 44 to 78 (RSGNRAQKDREQVKHTTKKPWRQKGTGRARAGMSS) is disordered. Residues 58 to 70 (HTTKKPWRQKGTG) show a composition bias toward basic residues.

The protein belongs to the universal ribosomal protein uL4 family. In terms of assembly, part of the 50S ribosomal subunit.

Functionally, one of the primary rRNA binding proteins, this protein initially binds near the 5'-end of the 23S rRNA. It is important during the early stages of 50S assembly. It makes multiple contacts with different domains of the 23S rRNA in the assembled 50S subunit and ribosome. Its function is as follows. Forms part of the polypeptide exit tunnel. This chain is Large ribosomal subunit protein uL4, found in Paraburkholderia phytofirmans (strain DSM 17436 / LMG 22146 / PsJN) (Burkholderia phytofirmans).